The sequence spans 458 residues: Probable threonine--tRNA ligase, cytoplasmic (458 aa).

In terms of domain architecture, TGS spans D41–G104.

Belongs to the class-II aminoacyl-tRNA synthetase family.

It localises to the cytoplasm. The enzyme catalyses tRNA(Thr) + L-threonine + ATP = L-threonyl-tRNA(Thr) + AMP + diphosphate + H(+). This chain is Probable threonine--tRNA ligase, cytoplasmic, found in Arabidopsis thaliana (Mouse-ear cress).